The chain runs to 319 residues: Probable enoyl-CoA hydratase alpha subunit (319 aa).

The tract at residues 199–298 (FEAAKQRRLV…EIGMPVVLDW (100 aa)) is DUF35.

The protein belongs to the thioester dehydratase family. As to quaternary structure, heterodimer composed of ChsH1 and ChsH2. Two heterodimers combine to form a heterotetramer. The complex interacts with Ltp2 via the DUF35 C-terminal region of ChsH2.

Probably involved in bile acid degradation. This Thermomonospora curvata (strain ATCC 19995 / DSM 43183 / JCM 3096 / KCTC 9072 / NBRC 15933 / NCIMB 10081 / Henssen B9) protein is Probable enoyl-CoA hydratase alpha subunit.